We begin with the raw amino-acid sequence, 205 residues long: MSPKVTKEHKDKRQAEILEAAKTVFKRKGFELTTMKDVVEESGFSRGGVYLYFSSTEEMFRRIIETGLDEGLRKLDKSAEHQSVWASISSYLDELTEGLRDVADTLAPVQFEYLVTAWRNEERRQYLEKRYDLFVERFSRLLQKGIDQGEFQPVQPLATIAKFFLNMNDGIIQNALYFDEEKADVSGLAESAKLYLKTVLQADEK.

The 61-residue stretch at 11–71 (DKRQAEILEA…RIIETGLDEG (61 aa)) folds into the HTH tetR-type domain. Residues 34-53 (TMKDVVEESGFSRGGVYLYF) constitute a DNA-binding region (H-T-H motif).

This is an uncharacterized protein from Bacillus subtilis (strain 168).